The primary structure comprises 495 residues: uncharacterized protein (495 aa).

The segment at 389–457 (PLPNNGACEH…KDATCPHCGN (69 aa)) adopts a CHY-type zinc-finger fold. C396, H398, C410, C411, C417, C420, H421, H427, C437, C440, C452, and C455 together coordinate Zn(2+). Positions 473-483 (GMRDRVRMSRK) are enriched in basic and acidic residues. The tract at residues 473-495 (GMRDRVRMSRKDPRKYKRKHHGN) is disordered. Residues 484–495 (DPRKYKRKHHGN) show a composition bias toward basic residues.

The protein localises to the cytoplasm. This is an uncharacterized protein from Schizosaccharomyces pombe (strain 972 / ATCC 24843) (Fission yeast).